A 144-amino-acid chain; its full sequence is uncharacterized protein (144 aa).

Residues 90–144 (KKEYSALKKSGKIHKVGGSKSSGHRKTKKPKKSMKGGSKTKKLSEKQLMKELLAM) are disordered. Positions 98-130 (KSGKIHKVGGSKSSGHRKTKKPKKSMKGGSKTK) are enriched in basic residues.

This is an uncharacterized protein from Sputnik virophage.